A 334-amino-acid polypeptide reads, in one-letter code: MALKKEGPEFDHDDEVLLLEPGIMLDESSADEQPSPRATPKATTSFSSKQHKHIDYTRALDATQLYLNEIGFSPLLTPEEEVHFARLAQKGDPAGRKRMIESNLRLVVKIARRYVNRGLSLLDLIEEGNLGLIRAVEKFDPERGFRFSTYATWWIRQTIERAIMNQTRTIRLPIHVVKELNVYLRAARELTHKLDHEPSPEEIANLLEKPVAEVKRMLGLNERVTSVDVSLGPDSDKTLLDTLTDDRPTDPCELLQDDDLSESIDQWLTELTDKQREVVIRRFGLRGHESSTLEEVGQEIGLTRERVRQIQVEALKRLREILEKNGLSSDALFQ.

Residues 21–50 (PGIMLDESSADEQPSPRATPKATTSFSSKQ) form a disordered region. The tract at residues 61-94 (DATQLYLNEIGFSPLLTPEEEVHFARLAQKGDPA) is sigma-70 factor domain-1. The sigma-70 factor domain-2 stretch occupies residues 99 to 169 (MIESNLRLVV…ERAIMNQTRT (71 aa)). The short motif at 123 to 126 (DLIE) is the Interaction with polymerase core subunit RpoC element. Residues 179-254 (ELNVYLRAAR…DDRPTDPCEL (76 aa)) form a sigma-70 factor domain-3 region. The tract at residues 267-320 (WLTELTDKQREVVIRRFGLRGHESSTLEEVGQEIGLTRERVRQIQVEALKRLRE) is sigma-70 factor domain-4. A DNA-binding region (H-T-H motif) is located at residues 293 to 312 (LEEVGQEIGLTRERVRQIQV).

Belongs to the sigma-70 factor family. RpoS subfamily. Interacts with the RNA polymerase core enzyme.

The protein localises to the cytoplasm. Its function is as follows. Sigma factors are initiation factors that promote the attachment of RNA polymerase to specific initiation sites and are then released. This sigma factor is the master transcriptional regulator of the stationary phase and the general stress response. The polypeptide is RNA polymerase sigma factor RpoS (Pseudomonas aeruginosa (strain ATCC 15692 / DSM 22644 / CIP 104116 / JCM 14847 / LMG 12228 / 1C / PRS 101 / PAO1)).